The chain runs to 252 residues: MNVKVYNLDGSEKGDIELPAVFEAEYRPDLIKRAVISSLTAKLQPKGCDAFAGYRTSAKSIGKGHGKARVRRTAQGAGAFVPQAVGGRRAHPPKVEKILFERINRKEKLKALASAIAASANPEIVSARGHKIEGVPSLPLVVNAEFESLVKTKEVLEVFKTLKLDADLERAKDGVKIRAGRGKLRGRKYIKPKSVLVVVGDACEAITASRNLAGVDVITANDLSAIHIAPGTMAGRLTLWTENAIEKINGRF.

It belongs to the universal ribosomal protein uL4 family. In terms of assembly, part of the 50S ribosomal subunit.

Its function is as follows. One of the primary rRNA binding proteins, this protein initially binds near the 5'-end of the 23S rRNA. It is important during the early stages of 50S assembly. It makes multiple contacts with different domains of the 23S rRNA in the assembled 50S subunit and ribosome. Forms part of the polypeptide exit tunnel. The sequence is that of Large ribosomal subunit protein uL4 from Methanococcus maripaludis (strain DSM 14266 / JCM 13030 / NBRC 101832 / S2 / LL).